The sequence spans 372 residues: Probable peptidoglycan glycosyltransferase FtsW (372 aa).

The Cytoplasmic segment spans residues 1-12; it reads MQKKSTISWSYD. Residues 13-33 traverse the membrane as a helical segment; the sequence is AWIVICTLSLLALGLLMVASA. The Periplasmic portion of the chain corresponds to 34–45; the sequence is SMVISDRQFGYP. A helical transmembrane segment spans residues 46–66; it reads FHYFIRHLIYLSLGLTLAWVA. Residues 67-77 are Cytoplasmic-facing; the sequence is SRVPIKVWKTY. The chain crosses the membrane as a helical span at residues 78 to 98; the sequence is SGYLFLVGFLLLILVLAPVIG. Residues 99–109 are Periplasmic-facing; that stretch reads KTVNGSRRWIQ. A helical transmembrane segment spans residues 110 to 130; that stretch reads LGFISLQVSEVVKFVTILYLA. The Cytoplasmic segment spans residues 131 to 142; sequence SFLQRYQSEVQK. The chain crosses the membrane as a helical span at residues 143 to 163; it reads ELKGFLKPMLLVGILSGLLLL. At 164-165 the chain is on the periplasmic side; the sequence is EP. Residues 166 to 186 traverse the membrane as a helical segment; it reads DFGAAVVITMTCLALLFLAGV. Arg187 is a topological domain (cytoplasmic). The helical transmembrane segment at 188–208 threads the bilayer; it reads LWPFCVLLVLVAGSLILLAIL. Topologically, residues 209 to 277 are periplasmic; it reads SPYRLQRLTS…LFAVLAEELG (69 aa). Residues 278–298 traverse the membrane as a helical segment; it reads LIGEILLMGLFVLLIGRIILI. Residues 299 to 315 lie on the Cytoplasmic side of the membrane; it reads GRRAENSNQLYSAYLAY. The chain crosses the membrane as a helical span at residues 316-336; the sequence is GIALWLGLQVIINIGVTAGVL. Topologically, residues 337 to 342 are periplasmic; the sequence is PTKGLT. The helical transmembrane segment at 343 to 363 threads the bilayer; that stretch reads LPFISYGGSSLLMNCLAIGVI. The Cytoplasmic portion of the chain corresponds to 364–372; sequence LRIAYETEN.

This sequence belongs to the SEDS family. FtsW subfamily.

Its subcellular location is the cell inner membrane. The enzyme catalyses [GlcNAc-(1-&gt;4)-Mur2Ac(oyl-L-Ala-gamma-D-Glu-L-Lys-D-Ala-D-Ala)](n)-di-trans,octa-cis-undecaprenyl diphosphate + beta-D-GlcNAc-(1-&gt;4)-Mur2Ac(oyl-L-Ala-gamma-D-Glu-L-Lys-D-Ala-D-Ala)-di-trans,octa-cis-undecaprenyl diphosphate = [GlcNAc-(1-&gt;4)-Mur2Ac(oyl-L-Ala-gamma-D-Glu-L-Lys-D-Ala-D-Ala)](n+1)-di-trans,octa-cis-undecaprenyl diphosphate + di-trans,octa-cis-undecaprenyl diphosphate + H(+). Its pathway is cell wall biogenesis; peptidoglycan biosynthesis. Functionally, peptidoglycan polymerase that is essential for cell division. In Coxiella burnetii (strain RSA 493 / Nine Mile phase I), this protein is Probable peptidoglycan glycosyltransferase FtsW.